The primary structure comprises 122 residues: Large ribosomal subunit protein uL18 (122 aa).

Basic residues predominate over residues 1-21 (MSKLSRKQQTQKRHRRLRRHL). The segment at 1 to 26 (MSKLSRKQQTQKRHRRLRRHLTGTSD) is disordered.

The protein belongs to the universal ribosomal protein uL18 family. As to quaternary structure, part of the 50S ribosomal subunit; part of the 5S rRNA/L5/L18/L25 subcomplex. Contacts the 5S and 23S rRNAs.

Functionally, this is one of the proteins that bind and probably mediate the attachment of the 5S RNA into the large ribosomal subunit, where it forms part of the central protuberance. The protein is Large ribosomal subunit protein uL18 of Parasynechococcus marenigrum (strain WH8102).